Here is a 151-residue protein sequence, read N- to C-terminus: Small ribosomal subunit protein uS9 (151 aa).

This sequence belongs to the universal ribosomal protein uS9 family.

The protein is Small ribosomal subunit protein uS9 (RpS16) of Spodoptera frugiperda (Fall armyworm).